A 235-amino-acid polypeptide reads, in one-letter code: Ribose-5-phosphate isomerase A (235 aa).

Substrate contacts are provided by residues 32-35 (TGST), 89-92 (DGAD), and 102-105 (KGGG). Residue Glu111 is the Proton acceptor of the active site. Residue Lys129 participates in substrate binding.

It belongs to the ribose 5-phosphate isomerase family. In terms of assembly, homodimer.

The catalysed reaction is aldehydo-D-ribose 5-phosphate = D-ribulose 5-phosphate. Its pathway is carbohydrate degradation; pentose phosphate pathway; D-ribose 5-phosphate from D-ribulose 5-phosphate (non-oxidative stage): step 1/1. In terms of biological role, catalyzes the reversible conversion of ribose-5-phosphate to ribulose 5-phosphate. The polypeptide is Ribose-5-phosphate isomerase A (Synechocystis sp. (strain ATCC 27184 / PCC 6803 / Kazusa)).